A 160-amino-acid chain; its full sequence is Photosystem II extrinsic protein V (160 aa).

The first 25 residues, 1–25, serve as a signal peptide directing secretion; sequence MKRFILLAIATVFFFCQFQTNPVNA. Heme c contacts are provided by Cys-62, Cys-65, His-66, and His-117.

The protein belongs to the cytochrome c family. PsbV subfamily. As to quaternary structure, PSII is composed of 1 copy each of membrane proteins PsbA, PsbB, PsbC, PsbD, PsbE, PsbF, PsbH, PsbI, PsbJ, PsbK, PsbL, PsbM, PsbT, PsbX, PsbY, PsbZ, Psb30/Ycf12, peripheral proteins PsbO, CyanoQ (PsbQ), PsbU, PsbV and a large number of cofactors. It forms dimeric complexes. Heme c is required as a cofactor.

The protein localises to the cellular thylakoid membrane. Its function is as follows. One of the extrinsic, lumenal subunits of photosystem II (PSII). PSII is a light-driven water plastoquinone oxidoreductase, using light energy to abstract electrons from H(2)O, generating a proton gradient subsequently used for ATP formation. The extrinsic proteins stabilize the structure of photosystem II oxygen-evolving complex (OEC), the ion environment of oxygen evolution and protect the OEC against heat-induced inactivation. Low-potential cytochrome c that plays a role in the OEC of PSII. The chain is Photosystem II extrinsic protein V from Rippkaea orientalis (strain PCC 8801 / RF-1) (Cyanothece sp. (strain PCC 8801)).